A 187-amino-acid polypeptide reads, in one-letter code: Inner membrane-spanning protein YciB (187 aa).

Transmembrane regions (helical) follow at residues 25–45 (ATGA…ALYK), 50–70 (MQLI…FLHD), 76–96 (WKVT…HVMG), 118–138 (INWA…YVAY), and 148–168 (FKVF…GGYI).

It belongs to the YciB family.

It is found in the cell inner membrane. In terms of biological role, plays a role in cell envelope biogenesis, maintenance of cell envelope integrity and membrane homeostasis. This chain is Inner membrane-spanning protein YciB, found in Vibrio vulnificus (strain CMCP6).